The sequence spans 343 residues: Holliday junction branch migration complex subunit RuvB (343 aa).

A large ATPase domain (RuvB-L) region spans residues 4–193 (TDNLTAAQPQ…FGIVSRLEFY (190 aa)). ATP-binding positions include leucine 32, arginine 33, glycine 74, lysine 77, threonine 78, threonine 79, 140–142 (EDY), arginine 183, tyrosine 193, and arginine 230. Threonine 78 is a Mg(2+) binding site. Residues 194-264 (ENRDLTTIVS…IADAALSMLD (71 aa)) are small ATPAse domain (RuvB-S). The tract at residues 267–343 (AQGLDVMDRK…YLHFGLPVEK (77 aa)) is head domain (RuvB-H). DNA is bound by residues arginine 322 and arginine 327.

Belongs to the RuvB family. As to quaternary structure, homohexamer. Forms an RuvA(8)-RuvB(12)-Holliday junction (HJ) complex. HJ DNA is sandwiched between 2 RuvA tetramers; dsDNA enters through RuvA and exits via RuvB. An RuvB hexamer assembles on each DNA strand where it exits the tetramer. Each RuvB hexamer is contacted by two RuvA subunits (via domain III) on 2 adjacent RuvB subunits; this complex drives branch migration. In the full resolvosome a probable DNA-RuvA(4)-RuvB(12)-RuvC(2) complex forms which resolves the HJ.

It is found in the cytoplasm. The enzyme catalyses ATP + H2O = ADP + phosphate + H(+). In terms of biological role, the RuvA-RuvB-RuvC complex processes Holliday junction (HJ) DNA during genetic recombination and DNA repair, while the RuvA-RuvB complex plays an important role in the rescue of blocked DNA replication forks via replication fork reversal (RFR). RuvA specifically binds to HJ cruciform DNA, conferring on it an open structure. The RuvB hexamer acts as an ATP-dependent pump, pulling dsDNA into and through the RuvAB complex. RuvB forms 2 homohexamers on either side of HJ DNA bound by 1 or 2 RuvA tetramers; 4 subunits per hexamer contact DNA at a time. Coordinated motions by a converter formed by DNA-disengaged RuvB subunits stimulates ATP hydrolysis and nucleotide exchange. Immobilization of the converter enables RuvB to convert the ATP-contained energy into a lever motion, pulling 2 nucleotides of DNA out of the RuvA tetramer per ATP hydrolyzed, thus driving DNA branch migration. The RuvB motors rotate together with the DNA substrate, which together with the progressing nucleotide cycle form the mechanistic basis for DNA recombination by continuous HJ branch migration. Branch migration allows RuvC to scan DNA until it finds its consensus sequence, where it cleaves and resolves cruciform DNA. This chain is Holliday junction branch migration complex subunit RuvB, found in Neisseria meningitidis serogroup C (strain 053442).